The chain runs to 115 residues: Macrophage migration inhibitory factor (115 aa).

Proline 2 acts as the Proton acceptor; via imino nitrogen in catalysis. Substrate contacts are provided by lysine 33 and isoleucine 65. N6-acetyllysine; alternate is present on lysine 78. Lysine 78 carries the post-translational modification N6-succinyllysine; alternate. Residue asparagine 98 coordinates substrate.

The protein belongs to the MIF family. As to quaternary structure, homotrimer. Interacts with CXCR2 extracellular domain. Interacts with the CD74 extracellular domain, USO1, COPS5 and BNIPL.

The protein resides in the secreted. It localises to the cytoplasm. The enzyme catalyses 3-phenylpyruvate = enol-phenylpyruvate. It carries out the reaction L-dopachrome = 5,6-dihydroxyindole-2-carboxylate. Pro-inflammatory cytokine involved in the innate immune response to bacterial pathogens. The expression of MIF at sites of inflammation suggests a role as mediator in regulating the function of macrophages in host defense. Counteracts the anti-inflammatory activity of glucocorticoids. Has phenylpyruvate tautomerase and dopachrome tautomerase activity (in vitro), but the physiological substrate is not known. It is not clear whether the tautomerase activity has any physiological relevance, and whether it is important for cytokine activity. This chain is Macrophage migration inhibitory factor, found in Homo sapiens (Human).